The chain runs to 396 residues: Elongation factor Tu (396 aa).

The region spanning 10–206 (KPHVNVGTIG…ALDTYIPEPE (197 aa)) is the tr-type G domain. Residues 19–26 (GHVDHGKT) are G1. Position 19–26 (19–26 (GHVDHGKT)) interacts with GTP. Residue T26 coordinates Mg(2+). Residues 60-64 (GITIN) are G2. A G3 region spans residues 81 to 84 (DCPG). Residues 81–85 (DCPGH) and 136–139 (NKCD) each bind GTP. The tract at residues 136 to 139 (NKCD) is G4. The G5 stretch occupies residues 174 to 176 (SAL).

It belongs to the TRAFAC class translation factor GTPase superfamily. Classic translation factor GTPase family. EF-Tu/EF-1A subfamily. Monomer.

It is found in the cytoplasm. It carries out the reaction GTP + H2O = GDP + phosphate + H(+). Functionally, GTP hydrolase that promotes the GTP-dependent binding of aminoacyl-tRNA to the A-site of ribosomes during protein biosynthesis. This chain is Elongation factor Tu, found in Acinetobacter baylyi (strain ATCC 33305 / BD413 / ADP1).